We begin with the raw amino-acid sequence, 1088 residues long: RNA-directed RNA polymerase (1088 aa).

Residues 501 to 687 (LSYGDVTRFL…AKRYIAGGKI (187 aa)) enclose the RdRp catalytic domain.

The protein belongs to the reoviridae RNA-directed RNA polymerase family. In terms of assembly, interacts with VP3 (Potential). Interacts with VP2; this interaction activates VP1. Interacts with NSP5; this interaction is probably necessary for the formation of functional virus factories. Interacts with NSP2; this interaction is weak. It depends on Mg(2+) as a cofactor.

Its subcellular location is the virion. The enzyme catalyses RNA(n) + a ribonucleoside 5'-triphosphate = RNA(n+1) + diphosphate. Functionally, RNA-directed RNA polymerase that is involved in both transcription and genome replication. Together with VP3 capping enzyme, forms an enzyme complex positioned near the channels situated at each of the five-fold vertices of the core. Following infection, the outermost layer of the virus is lost, leaving a double-layered particle (DLP) made up of the core and VP6 shell. VP1 then catalyzes the transcription of fully conservative plus-strand genomic RNAs that are extruded through the DLP's channels into the cytoplasm where they function as mRNAs for translation of viral proteins. One copy of each of the viral (+)RNAs is also recruited during core assembly, together with newly synthesized polymerase complexes and VP2. The polymerase of these novo-formed particles catalyzes the synthesis of complementary minus-strands leading to dsRNA formation. To do so, the polymerase specifically recognizes and binds 4 bases 5'-UGUG-3' in the conserved 3'-sequence of plus-strand RNA templates. VP2 presumably activates the autoinhibited VP1-RNA complex to coordinate packaging and genome replication. Once dsRNA synthesis is complete, the polymerase switches to the transcriptional mode, thus providing secondary transcription. This chain is RNA-directed RNA polymerase, found in Homo sapiens (Human).